We begin with the raw amino-acid sequence, 368 residues long: MVTGWHRPTWIEIDRAAIRENIKNEQNKLPESVDLWAVVKANAYGHGIIEVARTAKEAGAKGFCVAILDEALALREAGFQDDFILVLGATRKEDANLAAKNHISLTVFREDWLENLTLEATLRIHLKVDSGMGRLGIRTTEEARRIEATSTNDHQLQLEGIYTHFATADQLETSYFEQQLAKFQTILTSLKNRPTYVHTANSAASLLQPQIGFDAIRFGISMYGLTPSTEIKTSLPFELKPALALYTEMVHVKELAPGDSVSYGATYTATEREWVATLPIGYADGLIRHYSGFHVLVGGELAPIIGRVCMDQTIIKLPREFQTGSKVTIIGKDHGNTITADDAAQYLDTINYEVTCLLNERIPRKYIH.

The active-site Proton acceptor; specific for D-alanine is the Lys40. Lys40 carries the N6-(pyridoxal phosphate)lysine modification. A substrate-binding site is contributed by Arg134. Tyr263 serves as the catalytic Proton acceptor; specific for L-alanine. A substrate-binding site is contributed by Met310.

The protein belongs to the alanine racemase family. Pyridoxal 5'-phosphate serves as cofactor.

The enzyme catalyses L-alanine = D-alanine. It participates in amino-acid biosynthesis; D-alanine biosynthesis; D-alanine from L-alanine: step 1/1. In terms of biological role, catalyzes the interconversion of L-alanine and D-alanine. May also act on other amino acids. This Listeria monocytogenes serovar 1/2a (strain ATCC BAA-679 / EGD-e) protein is Alanine racemase (alr).